The chain runs to 115 residues: MAGFGLPNFGQITEAFKKAQQIQQDAQKLQEELDDMELEGTNEDGRVTVWLSGNQQPIRVKVENSILKEEEEIVEAAILEAMQKAHEISTSNMKSRMQELTGGLNLNLPGINDDN.

Belongs to the YbaB/EbfC family. Homodimer.

The protein localises to the cytoplasm. Its subcellular location is the nucleoid. In terms of biological role, binds to DNA and alters its conformation. May be involved in regulation of gene expression, nucleoid organization and DNA protection. The protein is Nucleoid-associated protein Pro_0020 of Prochlorococcus marinus (strain SARG / CCMP1375 / SS120).